The chain runs to 220 residues: GTP-binding nuclear protein GSP2/CNR2 (220 aa).

At S2 the chain carries N-acetylserine. Phosphoserine is present on S2. The 165-residue stretch at E10–N174 folds into the Small GTPase Ran-type domain. D21–T28 provides a ligand contact to GTP. The switch-I stretch occupies residues K40 to V48. GTP is bound by residues G71, N125–D128, and S153–K155. A switch-II region spans residues G71–Q87.

Belongs to the small GTPase superfamily. Ran family. Found in a nuclear export complex with RanGTP, exportin and pre-miRNA.

It localises to the nucleus. Functionally, GTP-binding protein involved in nucleocytoplasmic transport. Required for the import of protein into the nucleus and also for RNA export. Not essential for cell viability. This is GTP-binding nuclear protein GSP2/CNR2 (GSP2) from Saccharomyces cerevisiae (strain ATCC 204508 / S288c) (Baker's yeast).